The following is a 162-amino-acid chain: ATP synthase subunit delta, mitochondrial (162 aa).

The transit peptide at 1–24 directs the protein to the mitochondrion; that stretch reads MFSVARTAIRGAARPAVRIARRGY.

F-type ATP synthases have 2 components, the catalytic core F(1) and the membrane-embedded component F(0), linked together by a central stalk and a peripheral stalk. The central stalk, also called rotor shaft, is often seen as part of F(1). The peripheral stalk is seen as part of F(0). F(0) contains the membrane channel next to the rotor. F-type ATP synthases form dimers but each monomer functions independently in ATP generation. The dimer consists of 17 different polypeptides: ATP1 (subunit alpha, 3 molecules per monomer, part of F(1)), ATP2 (subunit beta, 3 copies per monomer, part of F(1)), ATP3 (subunit gamma, part of the central stalk), ATP4 (subunit b, part of the peripheral stalk), ATP5/OSCP (subunit 5/OSCP, part of the peripheral stalk), ATP6 (subunit a, part of the peripheral stalk), ATP7 (subunit d, part of the peripheral stalk), ATP8 (subunit 8, part of the peripheral stalk), OLI1 (subunit c, part of the rotor, 10 molecules per monomer), ATP14 (subunit h, part of the peripheral stalk), ATP15 (subunit epsilon, part of the central stalk), ATP16 (subunit delta, part of the central stalk), ATP17 (subunit f, part of the peripheral stalk), ATP18 (subunit i/j, part of the peripheral stalk), ATP19 (subunit k, dimer-specific, at interface between monomers), ATP20 (subunit g, at interface between monomers), TIM11 (subunit e, at interface between monomers).

It localises to the mitochondrion inner membrane. Mitochondrial membrane ATP synthase (F(1)F(0) ATP synthase or Complex V) produces ATP from ADP in the presence of a proton gradient across the membrane which is generated by electron transport complexes of the respiratory chain. F-type ATP synthases consist of two structural domains, F(1) - containing the extramembraneous catalytic core, and F(0) - containing the membrane proton channel, linked together by a central stalk and a peripheral stalk. During catalysis, ATP synthesis in the catalytic domain of F(1) is coupled via a rotary mechanism of the central stalk subunits to proton translocation. Part of the complex F(1) domain and the central stalk which is part of the complex rotary element. Rotation of the central stalk against the surrounding alpha/ATP1(3)beta/ATP2(3) subunits leads to hydrolysis of ATP in three separate catalytic sites on the beta/ATP2 subunits. This chain is ATP synthase subunit delta, mitochondrial, found in Yarrowia lipolytica (strain CLIB 122 / E 150) (Yeast).